A 377-amino-acid chain; its full sequence is Succinyl-diaminopimelate desuccinylase (377 aa).

H66 is a binding site for Zn(2+). Residue D68 is part of the active site. D99 contributes to the Zn(2+) binding site. The Proton acceptor role is filled by E133. Zn(2+)-binding residues include E134, E162, and H348.

It belongs to the peptidase M20A family. DapE subfamily. Homodimer. It depends on Zn(2+) as a cofactor. The cofactor is Co(2+).

The enzyme catalyses N-succinyl-(2S,6S)-2,6-diaminopimelate + H2O = (2S,6S)-2,6-diaminopimelate + succinate. It participates in amino-acid biosynthesis; L-lysine biosynthesis via DAP pathway; LL-2,6-diaminopimelate from (S)-tetrahydrodipicolinate (succinylase route): step 3/3. Its function is as follows. Catalyzes the hydrolysis of N-succinyl-L,L-diaminopimelic acid (SDAP), forming succinate and LL-2,6-diaminopimelate (DAP), an intermediate involved in the bacterial biosynthesis of lysine and meso-diaminopimelic acid, an essential component of bacterial cell walls. This chain is Succinyl-diaminopimelate desuccinylase, found in Histophilus somni (strain 2336) (Haemophilus somnus).